The following is a 321-amino-acid chain: 5,10-methylenetetrahydromethanopterin reductase (321 aa).

This sequence belongs to the mer family.

Its subcellular location is the cytoplasm. The enzyme catalyses 5-methyl-5,6,7,8-tetrahydromethanopterin + oxidized coenzyme F420-(gamma-L-Glu)(n) + H(+) = 5,10-methylenetetrahydromethanopterin + reduced coenzyme F420-(gamma-L-Glu)(n). It functions in the pathway one-carbon metabolism; methanogenesis from CO(2); methyl-coenzyme M from 5,10-methylene-5,6,7,8-tetrahydromethanopterin: step 1/2. Functionally, catalyzes the reversible reduction of methylene-H(4)MPT to methyl-H(4)MPT. The polypeptide is 5,10-methylenetetrahydromethanopterin reductase (Methanothermobacter thermautotrophicus (strain ATCC 29096 / DSM 1053 / JCM 10044 / NBRC 100330 / Delta H) (Methanobacterium thermoautotrophicum)).